The sequence spans 185 residues: Ribosome-recycling factor (185 aa).

Belongs to the RRF family.

The protein localises to the cytoplasm. Functionally, responsible for the release of ribosomes from messenger RNA at the termination of protein biosynthesis. May increase the efficiency of translation by recycling ribosomes from one round of translation to another. This is Ribosome-recycling factor from Pectobacterium carotovorum subsp. carotovorum (strain PC1).